The following is a 125-amino-acid chain: Glycine cleavage system H protein (125 aa).

Residues 22–104 (SYVIGITDFA…YDTGWILKLE (83 aa)) enclose the Lipoyl-binding domain. An N6-lipoyllysine modification is found at Lys63.

The protein belongs to the GcvH family. The glycine cleavage system is composed of four proteins: P, T, L and H. It depends on (R)-lipoate as a cofactor.

The glycine cleavage system catalyzes the degradation of glycine. The H protein shuttles the methylamine group of glycine from the P protein to the T protein. Its function is as follows. Is also involved in protein lipoylation via its role as an octanoyl/lipoyl carrier protein intermediate. This chain is Glycine cleavage system H protein, found in Listeria monocytogenes serotype 4b (strain CLIP80459).